The primary structure comprises 464 residues: Asparagine--tRNA ligase (464 aa).

This sequence belongs to the class-II aminoacyl-tRNA synthetase family. Homodimer.

Its subcellular location is the cytoplasm. It carries out the reaction tRNA(Asn) + L-asparagine + ATP = L-asparaginyl-tRNA(Asn) + AMP + diphosphate + H(+). In Acetivibrio thermocellus (strain ATCC 27405 / DSM 1237 / JCM 9322 / NBRC 103400 / NCIMB 10682 / NRRL B-4536 / VPI 7372) (Clostridium thermocellum), this protein is Asparagine--tRNA ligase.